A 267-amino-acid polypeptide reads, in one-letter code: MLNPTYLQQIRSQNPLIHNITNVVAANFSANGLLAIGASPLMSAAMEEMHEVPRLSQALVINIGTLMGKEVDAMVLAGKTANEVGIPVVLDPVGVGATTFRKQTVARLLKEVKFAAIRGNAGELATIAEVNWQAKGVDAGSGEADLAQIAHIVAKTYQCIAMISGATDYLSDGEHHAQIHNGTPLFPKITASGCLLSAVCGAFLAVAKPEQYFDAMLEACTAYAIAGELAAQGLKTTQHGQFYVGLLDQLAHLSPETINQYARISYE.

M42 is a substrate binding site. The ATP site is built by R118 and S164. Substrate is bound at residue A191.

It belongs to the Thz kinase family. Requires Mg(2+) as cofactor.

The enzyme catalyses 5-(2-hydroxyethyl)-4-methylthiazole + ATP = 4-methyl-5-(2-phosphooxyethyl)-thiazole + ADP + H(+). The protein operates within cofactor biosynthesis; thiamine diphosphate biosynthesis; 4-methyl-5-(2-phosphoethyl)-thiazole from 5-(2-hydroxyethyl)-4-methylthiazole: step 1/1. In terms of biological role, catalyzes the phosphorylation of the hydroxyl group of 4-methyl-5-beta-hydroxyethylthiazole (THZ). This chain is Hydroxyethylthiazole kinase, found in Pasteurella multocida (strain Pm70).